Here is a 5386-residue protein sequence, read N- to C-terminus: Nonribosomal peptide synthetase 2 (5386 aa).

The interval His-45 to Val-435 is adenylation 1. Residues Ser-544–Lys-617 enclose the Carrier 1 domain. Ser-578 is modified (O-(pantetheine 4'-phosphoryl)serine). The tract at residues Leu-652–Ile-1059 is condensation 1. The adenylation 2 stretch occupies residues Glu-1089–Arg-1482. Residues Glu-1611–Ser-1688 form the Carrier 2 domain. At Ser-1648 the chain carries O-(pantetheine 4'-phosphoryl)serine. Positions Ile-1731 to Pro-2141 are condensation 2. The segment at Phe-2166–Arg-2551 is adenylation 3. The 74-residue stretch at Ser-2652–Ser-2725 folds into the Carrier 3 domain. Position 2686 is an O-(pantetheine 4'-phosphoryl)serine (Ser-2686). Residues Arg-2763 to Asp-3174 form a condensation 3 region. The tract at residues Glu-3202 to Arg-3603 is adenylation 4. In terms of domain architecture, Carrier 4 spans Glu-3728–Ser-3805. The residue at position 3765 (Ser-3765) is an O-(pantetheine 4'-phosphoryl)serine. The segment at Leu-3846–Ala-4250 is condensation 4. The Carrier 5 domain occupies Phe-4281–Asn-4357. Ser-4318 carries the O-(pantetheine 4'-phosphoryl)serine modification. Residues Glu-4391–Met-4802 are condensation 5. The disordered stretch occupies residues His-4821–Thr-4842. The 74-residue stretch at Thr-4840 to Ala-4913 folds into the Carrier 6 domain. The residue at position 4874 (Ser-4874) is an O-(pantetheine 4'-phosphoryl)serine. The tract at residues Gln-4952 to Asp-5257 is condensation 6.

Belongs to the NRP synthetase family.

It functions in the pathway siderophore biosynthesis. Functionally, nonribosomal peptide synthetase; part of the gene cluster that mediates the biosynthesis of hydroxamate-containing siderophores that play a critical role in virulence. Cochliobolus heterostrophus produces extracellular coprogen-type siderophores including coprogen, neocoprogen I and neocoprogen II, as well as the intracellular siderophore ferricrocin. The role of extracellular siderophores is to supply iron to the fungus during plant infection, and the intracellular ferricrocin is required for intracellular iron distribution and storage with a crucial role in ascus and ascospore development. SIDA2 catalyzes the conversion of L-ornithine to N(5)-hydroxyornithine, the first step in the biosynthesis of all hydroxamate-containing siderophores. The assembly of extracellular coprogen-type siderophores is then performed by the nonribosomal peptide synthetase (NRPS) NPS6 whereas the intracellular siderophore ferricrocin is assembled by NPS2. The protein is Nonribosomal peptide synthetase 2 of Cochliobolus heterostrophus (strain C4 / ATCC 48331 / race T) (Southern corn leaf blight fungus).